The sequence spans 310 residues: Methionyl-tRNA formyltransferase (310 aa).

109 to 112 (SLLP) lines the (6S)-5,6,7,8-tetrahydrofolate pocket.

The protein belongs to the Fmt family.

It carries out the reaction L-methionyl-tRNA(fMet) + (6R)-10-formyltetrahydrofolate = N-formyl-L-methionyl-tRNA(fMet) + (6S)-5,6,7,8-tetrahydrofolate + H(+). Functionally, attaches a formyl group to the free amino group of methionyl-tRNA(fMet). The formyl group appears to play a dual role in the initiator identity of N-formylmethionyl-tRNA by promoting its recognition by IF2 and preventing the misappropriation of this tRNA by the elongation apparatus. The protein is Methionyl-tRNA formyltransferase of Pseudomonas putida (strain ATCC 47054 / DSM 6125 / CFBP 8728 / NCIMB 11950 / KT2440).